Here is a 908-residue protein sequence, read N- to C-terminus: Adhesion G-protein coupled receptor F1 (908 aa).

The signal sequence occupies residues 1-20; the sequence is MRIGLLWLVPLFTLTEGTDG. Over 21 to 588 the chain is Extracellular; the sequence is FLQQKNDGRR…VVPVVKWITY (568 aa). Residues N133, N167, N328, N353, N367, N388, N422, N453, N510, N519, N526, and N551 are each glycosylated (N-linked (GlcNAc...) asparagine). The 109-residue stretch at 147–255 folds into the SEA domain; the sequence is ERAKVWGTFE…GSFRVFGKAP (109 aa). In terms of domain architecture, GAIN-B spans 434-577; it reads PVTQIQSTRG…SMLMSPFVPS (144 aa). Disulfide bonds link C532–C559 and C547–C561. The interval 532–577 is GPS; it reads CVFWDFSQLQWSNAGCQLVNETLDTVLCRCSHLTSFSMLMSPFVPS. The stachel stretch occupies residues 566–574; it reads SFSMLMSPF. The chain crosses the membrane as a helical span at residues 589–609; that stretch reads IGLSISIASLILCLIIESLFW. Over 610–622 the chain is Cytoplasmic; the sequence is KQTKRSQTSYTRN. Residues 623–643 form a helical membrane-spanning segment; sequence ICLVNIAVSLLIADVWFIIAA. The Extracellular segment spans residues 644-658; the sequence is TVDPSVSPSGVCVAA. C655 and C731 are disulfide-bonded. Residues 659 to 679 form a helical membrane-spanning segment; that stretch reads VFFTHFFYLAVFFWMLVLGIL. At 680–697 the chain is on the cytoplasmic side; that stretch reads LAYRIILVFHHMALTTMM. Residues 698 to 718 traverse the membrane as a helical segment; that stretch reads AIGFCLGYGCPLLISIITLAV. At 719–742 the chain is on the extracellular side; the sequence is TQPSNSYKRNDVCWLNWSDKSKPL. Residue N734 is glycosylated (N-linked (GlcNAc...) asparagine). The chain crosses the membrane as a helical span at residues 743-763; that stretch reads LAFVVPALTIVAVNLVVVLLV. The Cytoplasmic portion of the chain corresponds to 764–789; sequence LRKLWRPAVGERLNQDDKATAIRMGK. The helical transmembrane segment at 790–810 threads the bilayer; the sequence is SLLVLTPLLGLTWGFGIGTMA. Over 811–818 the chain is Extracellular; that stretch reads NSHNLAWH. Residues 819 to 839 traverse the membrane as a helical segment; it reads VLFALLNAFQGFFIFCFGILL. The Cytoplasmic portion of the chain corresponds to 840-908; it reads DTKLRQLLSN…ITLTQFLSTE (69 aa).

Belongs to the G-protein coupled receptor 2 family. Adhesion G-protein coupled receptor (ADGR) subfamily. In terms of assembly, heterodimer of 2 chains generated by proteolytic processing; the large extracellular N-terminal fragment and the membrane-bound C-terminal fragment predominantly remain associated and non-covalently linked. Post-translationally, autoproteolytically processed at the GPS region of the GAIN-B domain; this cleavage modulates receptor activity. Expressed in liver, kidney and adrenal gland. In kidney strong expression in the renal pelvis and the ureter.

The protein localises to the cell membrane. With respect to regulation, forms a heterodimer of 2 chains generated by proteolytic processing that remain associated through non-covalent interactions mediated by the GAIN-B domain. In the inactivated receptor, the Stachel sequence (also named stalk) is embedded in the GAIN-B domain, where it adopts a beta-strand conformation. On activation, the Stachel moves into the 7 transmembrane region and adopts a twisted hook-shaped configuration that forms contacts within the receptor, leading to coupling of a G-alpha protein, which activates signaling. The cleaved GAIN-B and N-terminal domains can then dissociate from the rest of the receptor. Functionally, adhesion G-protein coupled receptor (aGPCR) for N-docosahexaenoylethanolamine (synaptamide), an omega-3 fatty acid lipid highly enriched in the brain. Ligand binding causes a conformation change that triggers signaling via guanine nucleotide-binding proteins (G proteins) and modulates the activity of downstream effectors, such as adenylate cyclase. ADGRF1 is coupled to G(s) G proteins and mediates activation of adenylate cyclase activity. Also able to couple to G(q), G(i) and G(12)/G(13) G proteins; additional evidence is however required to confirm this result in vivo. Involved in the development of neurons and cognitive function. In liver, involved in fat accumulation. This is Adhesion G-protein coupled receptor F1 from Mus musculus (Mouse).